The sequence spans 371 residues: Ferrochelatase (371 aa).

Residues H218 and E299 each coordinate Fe cation.

It belongs to the ferrochelatase family.

Its subcellular location is the cytoplasm. It carries out the reaction heme b + 2 H(+) = protoporphyrin IX + Fe(2+). It functions in the pathway porphyrin-containing compound metabolism; protoheme biosynthesis; protoheme from protoporphyrin-IX: step 1/1. Catalyzes the ferrous insertion into protoporphyrin IX. The protein is Ferrochelatase of Cupriavidus metallidurans (strain ATCC 43123 / DSM 2839 / NBRC 102507 / CH34) (Ralstonia metallidurans).